Consider the following 86-residue polypeptide: MQDELFETEKAPQKNTKNAKNAPKKSFEEHVHSLEQAIDRLNDPNLSLKDGMDLYKTAMQELVLAQKLLENAYLEYEKLQTLDKKA.

The disordered stretch occupies residues 1-26 (MQDELFETEKAPQKNTKNAKNAPKKS).

This sequence belongs to the XseB family. In terms of assembly, heterooligomer composed of large and small subunits.

The protein resides in the cytoplasm. It catalyses the reaction Exonucleolytic cleavage in either 5'- to 3'- or 3'- to 5'-direction to yield nucleoside 5'-phosphates.. In terms of biological role, bidirectionally degrades single-stranded DNA into large acid-insoluble oligonucleotides, which are then degraded further into small acid-soluble oligonucleotides. In Helicobacter pylori (strain HPAG1), this protein is Exodeoxyribonuclease 7 small subunit.